The following is a 412-amino-acid chain: Glucose-1-phosphate adenylyltransferase (412 aa).

Alpha-D-glucose 1-phosphate-binding positions include G163, E179 to K180, and S197.

It belongs to the bacterial/plant glucose-1-phosphate adenylyltransferase family. In terms of assembly, homotetramer.

The enzyme catalyses alpha-D-glucose 1-phosphate + ATP + H(+) = ADP-alpha-D-glucose + diphosphate. Its pathway is glycan biosynthesis; glycogen biosynthesis. Involved in the biosynthesis of ADP-glucose, a building block required for the elongation reactions to produce glycogen. Catalyzes the reaction between ATP and alpha-D-glucose 1-phosphate (G1P) to produce pyrophosphate and ADP-Glc. The protein is Glucose-1-phosphate adenylyltransferase of Frankia casuarinae (strain DSM 45818 / CECT 9043 / HFP020203 / CcI3).